The following is a 33-amino-acid chain: Photosystem II reaction center protein Psb30 (33 aa).

A helical membrane pass occupies residues 5-25 (VIAQLTVLTLMVVSGPLVIVL).

It belongs to the Psb30/Ycf12 family. PSII is composed of 1 copy each of membrane proteins PsbA, PsbB, PsbC, PsbD, PsbE, PsbF, PsbH, PsbI, PsbJ, PsbK, PsbL, PsbM, PsbT, PsbX, PsbY, PsbZ, Psb30/Ycf12, peripheral proteins of the oxygen-evolving complex and a large number of cofactors. It forms dimeric complexes.

The protein resides in the plastid. The protein localises to the chloroplast thylakoid membrane. A core subunit of photosystem II (PSII), probably helps stabilize the reaction center. This is Photosystem II reaction center protein Psb30 from Pinus koraiensis (Korean pine).